The sequence spans 199 residues: Ribonuclease HII (199 aa).

Positions 10–199 constitute an RNase H type-2 domain; it reads RIEAGCDEAG…LLPEQLTLGF (190 aa). A divalent metal cation-binding residues include aspartate 16, glutamate 17, and aspartate 108.

It belongs to the RNase HII family. It depends on Mn(2+) as a cofactor. The cofactor is Mg(2+).

It localises to the cytoplasm. It carries out the reaction Endonucleolytic cleavage to 5'-phosphomonoester.. Functionally, endonuclease that specifically degrades the RNA of RNA-DNA hybrids. This is Ribonuclease HII from Parabacteroides distasonis (strain ATCC 8503 / DSM 20701 / CIP 104284 / JCM 5825 / NCTC 11152).